Reading from the N-terminus, the 120-residue chain is uncharacterized protein (120 aa).

This is an uncharacterized protein from Mycobacterium tuberculosis (strain CDC 1551 / Oshkosh).